Reading from the N-terminus, the 171-residue chain is UPF0763 protein HPSH_03535 (171 aa).

It belongs to the UPF0763 family.

The polypeptide is UPF0763 protein HPSH_03535 (Helicobacter pylori (strain Shi470)).